We begin with the raw amino-acid sequence, 353 residues long: Photosystem II D2 protein (353 aa).

Threonine 2 carries the post-translational modification N-acetylthreonine. Threonine 2 is modified (phosphothreonine). Residues 41-61 traverse the membrane as a helical segment; that stretch reads CAYFALGGWFTGTTFVTSWYT. Histidine 118 is a binding site for chlorophyll a. Residues 125–141 traverse the membrane as a helical segment; sequence GFMLRQFELARSVQLRP. Residues glutamine 130 and asparagine 143 each contribute to the pheophytin a site. A helical transmembrane segment spans residues 153-166; sequence VFVSVFLIYPLGQS. Histidine 198 serves as a coordination point for chlorophyll a. Residues 208–228 traverse the membrane as a helical segment; that stretch reads AALLCAIHGATVENTLFEDGD. A plastoquinone is bound by residues histidine 215 and phenylalanine 262. Fe cation is bound at residue histidine 215. Residue histidine 269 coordinates Fe cation. A helical transmembrane segment spans residues 279–295; the sequence is GLWMSALGVVGLALNLR.

The protein belongs to the reaction center PufL/M/PsbA/D family. PSII is composed of 1 copy each of membrane proteins PsbA, PsbB, PsbC, PsbD, PsbE, PsbF, PsbH, PsbI, PsbJ, PsbK, PsbL, PsbM, PsbT, PsbX, PsbY, PsbZ, Psb30/Ycf12, at least 3 peripheral proteins of the oxygen-evolving complex and a large number of cofactors. It forms dimeric complexes. The cofactor is The D1/D2 heterodimer binds P680, chlorophylls that are the primary electron donor of PSII, and subsequent electron acceptors. It shares a non-heme iron and each subunit binds pheophytin, quinone, additional chlorophylls, carotenoids and lipids. There is also a Cl(-1) ion associated with D1 and D2, which is required for oxygen evolution. The PSII complex binds additional chlorophylls, carotenoids and specific lipids..

Its subcellular location is the plastid. The protein localises to the chloroplast thylakoid membrane. The catalysed reaction is 2 a plastoquinone + 4 hnu + 2 H2O = 2 a plastoquinol + O2. In terms of biological role, photosystem II (PSII) is a light-driven water:plastoquinone oxidoreductase that uses light energy to abstract electrons from H(2)O, generating O(2) and a proton gradient subsequently used for ATP formation. It consists of a core antenna complex that captures photons, and an electron transfer chain that converts photonic excitation into a charge separation. The D1/D2 (PsbA/PsbD) reaction center heterodimer binds P680, the primary electron donor of PSII as well as several subsequent electron acceptors. D2 is needed for assembly of a stable PSII complex. In Spinacia oleracea (Spinach), this protein is Photosystem II D2 protein.